Here is a 500-residue protein sequence, read N- to C-terminus: Protein O-glucosyltransferase 2 (500 aa).

The signal sequence occupies residues 1-22 (MLRKLLLLLMSCIIFLTRRSKA). One copy of the Filamin repeat lies at 23–128 (AAAASASKTL…LVGKSPYVLR (106 aa)). 2 N-linked (GlcNAc...) asparagine glycosylation sites follow: Asn60 and Asn259. A Prevents secretion from ER motif is present at residues 497-500 (RDEL).

It belongs to the KDELC family.

The protein resides in the endoplasmic reticulum lumen. The enzyme catalyses L-seryl-[EGF-like domain protein] + UDP-alpha-D-glucose = 3-O-(beta-D-glucosyl)-L-seryl-[EGF-like domain protein] + UDP + H(+). It catalyses the reaction L-seryl-[EGF-like domain protein] + UDP-alpha-D-xylose = 3-O-(beta-D-xylosyl)-L-seryl-[EGF-like domain protein] + UDP + H(+). The protein operates within protein modification; protein glycosylation. Protein glucosyltransferase that catalyzes the transfer of glucose from UDP-glucose to a serine residue within the consensus sequence peptide C-X-N-T-X-G-S-F-X-C. Can also catalyze the transfer of xylose from UDP-xylose but less efficiently. The chain is Protein O-glucosyltransferase 2 (poglut2) from Danio rerio (Zebrafish).